Reading from the N-terminus, the 20-residue chain is Protein PR-L1 (20 aa).

This sequence belongs to the BetVI family.

The protein is Protein PR-L1 of Lupinus luteus (European yellow lupine).